The chain runs to 463 residues: Type IV secretion system protein PtlD homolog (463 aa).

The first 24 residues, 1–24 (MAGLSRILLSCTLACLLAGQAAQA), serve as a signal peptide directing secretion. The next 5 membrane-spanning stretches (helical) occupy residues 118–138 (LQPL…YALL), 232–252 (WLLC…LAAS), 253–273 (LLIV…LFLV), 294–314 (ALVF…VLAG), and 333–353 (MLAA…VPLA). Residues 376 to 410 (AHRQAAARQYAPRPAAAAAAAGPHQAGTYAASATP) show a composition bias toward low complexity. The segment at 376–463 (AHRQAAARQY…RVLPRKPNLP (88 aa)) is disordered. Residues 411–420 (APAPARPAPS) are compositionally biased toward pro residues. The segment covering 441-455 (VRRDDRPAPAPDRRV) has biased composition (basic and acidic residues).

It localises to the cell membrane. This chain is Type IV secretion system protein PtlD homolog (ptlD), found in Bordetella parapertussis (strain 12822 / ATCC BAA-587 / NCTC 13253).